The following is a 702-amino-acid chain: Ribosomal RNA large subunit methyltransferase K/L (702 aa).

One can recognise a THUMP domain in the interval 43 to 154 (LVYQSLMWSR…KETASIALDL (112 aa)).

It belongs to the methyltransferase superfamily. RlmKL family.

Its subcellular location is the cytoplasm. It carries out the reaction guanosine(2445) in 23S rRNA + S-adenosyl-L-methionine = N(2)-methylguanosine(2445) in 23S rRNA + S-adenosyl-L-homocysteine + H(+). The enzyme catalyses guanosine(2069) in 23S rRNA + S-adenosyl-L-methionine = N(2)-methylguanosine(2069) in 23S rRNA + S-adenosyl-L-homocysteine + H(+). Specifically methylates the guanine in position 2445 (m2G2445) and the guanine in position 2069 (m7G2069) of 23S rRNA. This chain is Ribosomal RNA large subunit methyltransferase K/L, found in Shigella dysenteriae serotype 1 (strain Sd197).